A 341-amino-acid chain; its full sequence is Adenylosuccinate synthetase (341 aa).

GTP is bound by residues 12–18 (GDEGKGK) and 42–44 (GHS). D13 (proton acceptor) is an active-site residue. Positions 13 and 42 each coordinate Mg(2+). IMP-binding positions include 13–16 (DEGK), 40–43 (NAGH), T127, R141, Q179, T194, and R256. H43 (proton donor) is an active-site residue. A substrate-binding site is contributed by 252 to 258 (VVTGRKR). GTP is bound by residues R258, 284–286 (CID), and 324–326 (STG).

It belongs to the adenylosuccinate synthetase family. In terms of assembly, homodimer. Mg(2+) serves as cofactor.

The protein resides in the cytoplasm. It catalyses the reaction IMP + L-aspartate + GTP = N(6)-(1,2-dicarboxyethyl)-AMP + GDP + phosphate + 2 H(+). Its pathway is purine metabolism; AMP biosynthesis via de novo pathway; AMP from IMP: step 1/2. Plays an important role in the de novo pathway of purine nucleotide biosynthesis. Catalyzes the first committed step in the biosynthesis of AMP from IMP. In Methanosphaera stadtmanae (strain ATCC 43021 / DSM 3091 / JCM 11832 / MCB-3), this protein is Adenylosuccinate synthetase.